Consider the following 513-residue polypeptide: Carboxyethyl-arginine beta-lactam-synthase (513 aa).

Mg(2+)-binding residues include Asp253 and Asp351.

The protein belongs to the asparagine synthetase family. Homodimer. The cofactor is Mg(2+).

The enzyme catalyses N(2)-(2-carboxyethyl)-L-arginine + ATP = deoxyamidinoproclavaminate + AMP + diphosphate + H(+). It functions in the pathway antibiotic biosynthesis; clavulanate biosynthesis; clavulanate from D-glyceraldehyde 3-phosphate and L-arginine: step 2/8. The polypeptide is Carboxyethyl-arginine beta-lactam-synthase (bls) (Streptomyces clavuligerus).